We begin with the raw amino-acid sequence, 379 residues long: Presenilin-associated rhomboid-like protein, mitochondrial (379 aa).

The N-terminal 52 residues, 1 to 52 (MAWRGWAQRGWGCGQAWGASVGGRSCEELTAVLTPPQLLGRRFNFFIQQKCG), are a transit peptide targeting the mitochondrion. Topologically, residues 53-101 (FRKAPRKVEPRRSDPGTSGEAYKRSALIPPVEETVFYPSPYPIRSLIKP) are mitochondrial matrix. Ser-65 is modified (phosphoserine). The residue at position 69 (Thr-69) is a Phosphothreonine. Ser-70 carries the post-translational modification Phosphoserine. Residues 102–121 (LFFTVGFTGCAFGSAAIWQY) form a helical membrane-spanning segment. At 122 to 167 (ESLKSRVQSYFDGIKADWLDSIRPQKEGDFRKEINKWWNNLSDGQR) the chain is on the mitochondrial intermembrane side. A helical transmembrane segment spans residues 168–187 (TVTGIIAANVLVFCLWRVPS). The Mitochondrial matrix segment spans residues 188-207 (LQRTMIRYFTSNPASKVLCS). The helical transmembrane segment at 208–230 (PMLLSTFSHFSLFHMAANMYVLW) threads the bilayer. At 231–244 (SFSSSIVNILGQEQ) the chain is on the mitochondrial intermembrane side. Residues 245–262 (FMAVYLSAGVISNFVSYV) form a helical membrane-spanning segment. Topologically, residues 263-272 (GKVATGRYGP) are mitochondrial matrix. A helical membrane pass occupies residues 273–289 (SLGASGAIMTVLAAVCT). Catalysis depends on Ser-277, which acts as the Nucleophile. Residues 290-295 (KIPEGR) lie on the Mitochondrial intermembrane side of the membrane. The helical transmembrane segment at 296 to 318 (LAIIFLPMFTFTAGNALKAIIAM) threads the bilayer. Residues 319–332 (DTAGMILGWKFFDH) lie on the Mitochondrial matrix side of the membrane. The helical transmembrane segment at 333–354 (AAHLGGALFGIWYVTYGHELIW) threads the bilayer. The active site involves His-335. The Mitochondrial intermembrane portion of the chain corresponds to 355–379 (KNREPLVKIWHEIRTNGPKKGGGSK).

It belongs to the peptidase S54 family. Interacts with PSEN1 and PSEN2. Binds OPA1. Post-translationally, P-beta is proteolytically processed (beta-cleavage) in a PARL-dependent manner. The cleavage is inhibited when residues Ser-65, Thr-69 and Ser-70 are all phosphorylated.

Its subcellular location is the mitochondrion inner membrane. It is found in the nucleus. The enzyme catalyses Cleaves type-1 transmembrane domains using a catalytic dyad composed of serine and histidine that are contributed by different transmembrane domains.. Functionally, required for the control of apoptosis during postnatal growth. Essential for proteolytic processing of an antiapoptotic form of OPA1 which prevents the release of mitochondrial cytochrome c in response to intrinsic apoptotic signals. Required for the maturation of PINK1 into its 52kDa mature form after its cleavage by mitochondrial-processing peptidase (MPP). Promotes cleavage of serine/threonine-protein phosphatase PGAM5 in damaged mitochondria in response to loss of mitochondrial membrane potential. Mediates differential cleavage of PINK1 and PGAM5 depending on the health status of mitochondria, disassociating from PINK1 and associating with PGAM5 in response to mitochondrial membrane potential loss. Required for processing of CLPB into a form with higher protein disaggregase activity by removing an autoinhibitory N-terminal peptide. Promotes processing of DIABLO/SMAC in the mitochondrion which is required for DIABLO apoptotic activity. Also required for cleavage of STARD7 and TTC19. Promotes changes in mitochondria morphology regulated by phosphorylation of P-beta domain. The protein is Presenilin-associated rhomboid-like protein, mitochondrial (PARL) of Homo sapiens (Human).